Here is a 1113-residue protein sequence, read N- to C-terminus: Coiled-coil domain-containing protein 158 (1113 aa).

Over residues 1-14 (MESKAWESNNEDLL) the composition is skewed to polar residues. Residues 1–26 (MESKAWESNNEDLLSSSGVTSNGGSS) form a disordered region. Residues 15–26 (SSSGVTSNGGSS) are compositionally biased toward low complexity. Coiled coils occupy residues 72-183 (GKEH…LSHE) and 243-833 (VEDQ…QEQE). Disordered regions lie at residues 848-902 (LQGP…DPTR) and 955-1062 (CHRS…IETT). 5 stretches are compositionally biased toward polar residues: residues 867 to 894 (ASVT…TKAN), 955 to 974 (CHRS…SSET), 994 to 1017 (FTFT…SSPK), 1024 to 1040 (LLTS…SQYR), and 1053 to 1062 (DSQSPPIETT). Residues 1061–1113 (TTGKTCRKLQNRLESLQTLVEDLQLKNQAMSSMIRNQEKRIQKVKDQEKMLLK) adopt a coiled-coil conformation.

The chain is Coiled-coil domain-containing protein 158 (CCDC158) from Homo sapiens (Human).